The following is a 102-amino-acid chain: Small ribosomal subunit protein uS10 (102 aa).

This sequence belongs to the universal ribosomal protein uS10 family. Part of the 30S ribosomal subunit.

Involved in the binding of tRNA to the ribosomes. The chain is Small ribosomal subunit protein uS10 from Thermoanaerobacter pseudethanolicus (strain ATCC 33223 / 39E) (Clostridium thermohydrosulfuricum).